The primary structure comprises 231 residues: Phosphatidylserine decarboxylase proenzyme (231 aa).

Catalysis depends on serine 200, which acts as the Schiff-base intermediate with substrate; via pyruvic acid. Residue serine 200 is modified to Pyruvic acid (Ser); by autocatalysis.

This sequence belongs to the phosphatidylserine decarboxylase family. PSD-A subfamily. As to quaternary structure, heterodimer of a large membrane-associated beta subunit and a small pyruvoyl-containing alpha subunit. The cofactor is pyruvate. In terms of processing, is synthesized initially as an inactive proenzyme. Formation of the active enzyme involves a self-maturation process in which the active site pyruvoyl group is generated from an internal serine residue via an autocatalytic post-translational modification. Two non-identical subunits are generated from the proenzyme in this reaction, and the pyruvate is formed at the N-terminus of the alpha chain, which is derived from the carboxyl end of the proenzyme. The post-translation cleavage follows an unusual pathway, termed non-hydrolytic serinolysis, in which the side chain hydroxyl group of the serine supplies its oxygen atom to form the C-terminus of the beta chain, while the remainder of the serine residue undergoes an oxidative deamination to produce ammonia and the pyruvoyl prosthetic group on the alpha chain.

The protein resides in the cell membrane. It carries out the reaction a 1,2-diacyl-sn-glycero-3-phospho-L-serine + H(+) = a 1,2-diacyl-sn-glycero-3-phosphoethanolamine + CO2. The protein operates within phospholipid metabolism; phosphatidylethanolamine biosynthesis; phosphatidylethanolamine from CDP-diacylglycerol: step 2/2. Functionally, catalyzes the formation of phosphatidylethanolamine (PtdEtn) from phosphatidylserine (PtdSer). This chain is Phosphatidylserine decarboxylase proenzyme, found in Mycobacterium tuberculosis (strain ATCC 25177 / H37Ra).